The following is a 314-amino-acid chain: Bifunctional riboflavin kinase/FMN adenylyltransferase (314 aa).

It belongs to the RibF family.

It catalyses the reaction riboflavin + ATP = FMN + ADP + H(+). It carries out the reaction FMN + ATP + H(+) = FAD + diphosphate. It functions in the pathway cofactor biosynthesis; FAD biosynthesis; FAD from FMN: step 1/1. The protein operates within cofactor biosynthesis; FMN biosynthesis; FMN from riboflavin (ATP route): step 1/1. Catalyzes the phosphorylation of riboflavin to FMN followed by the adenylation of FMN to FAD. Can also catalyze the phosphorylation of the toxic riboflavin analogs 8-demethyl-8-aminoriboflavin (AF) to 8-demethyl-8-aminoriboflavin mononucleotide (AFMN) and roseoflavin (RoF) to roseoflavin mononucleotide (RoFMN), and the adenylation of AFMN to 8-demethyl-8-aminoriboflavin adenine dinucleotide (AFAD). This Listeria monocytogenes serovar 1/2a (strain ATCC BAA-679 / EGD-e) protein is Bifunctional riboflavin kinase/FMN adenylyltransferase.